Reading from the N-terminus, the 271-residue chain is Methylthioribulose-1-phosphate dehydratase (271 aa).

A substrate-binding site is contributed by Cys123. The Zn(2+) site is built by His141 and His143. The active-site Proton donor/acceptor is Glu166. His231 contributes to the Zn(2+) binding site.

It belongs to the aldolase class II family. MtnB subfamily. The cofactor is Zn(2+).

The protein resides in the cytoplasm. The enzyme catalyses 5-(methylsulfanyl)-D-ribulose 1-phosphate = 5-methylsulfanyl-2,3-dioxopentyl phosphate + H2O. Its pathway is amino-acid biosynthesis; L-methionine biosynthesis via salvage pathway; L-methionine from S-methyl-5-thio-alpha-D-ribose 1-phosphate: step 2/6. Functionally, catalyzes the dehydration of methylthioribulose-1-phosphate (MTRu-1-P) into 2,3-diketo-5-methylthiopentyl-1-phosphate (DK-MTP-1-P). The chain is Methylthioribulose-1-phosphate dehydratase from Candida dubliniensis (strain CD36 / ATCC MYA-646 / CBS 7987 / NCPF 3949 / NRRL Y-17841) (Yeast).